A 521-amino-acid polypeptide reads, in one-letter code: Alkyl hydroperoxide reductase subunit F (521 aa).

K53 is subject to N6-acetyllysine. Residue 214–229 participates in FAD binding; that stretch reads DVLIVGSGPAGAAAAI. The cysteines at positions 345 and 348 are disulfide-linked. An N6-acetyllysine modification is found at K354. Residue 357–371 participates in NAD(+) binding; sequence RVAVIGGGNSGVEAA. FAD is bound at residue 478–488; sequence TNVKGVFAAGD.

It belongs to the class-II pyridine nucleotide-disulfide oxidoreductase family. Homodimer. FAD serves as cofactor.

Serves to protect the cell against DNA damage by alkyl hydroperoxides. It can use either NADH or NADPH as electron donor for direct reduction of redox dyes or of alkyl hydroperoxides when combined with the AhpC protein. This chain is Alkyl hydroperoxide reductase subunit F (ahpF), found in Escherichia coli (strain K12).